A 487-amino-acid polypeptide reads, in one-letter code: GTPase Der (487 aa).

EngA-type G domains are found at residues 3-166 (PVVA…AEAM) and 199-372 (IKLA…DSAT). GTP contacts are provided by residues 9-16 (GRPNVGKS), 56-60 (DTGGI), 118-121 (NKID), 205-212 (GKPNVGKS), 252-256 (DTAGV), and 317-320 (NKWD). The KH-like domain maps to 373–457 (RRVSTSMLTR…PIQLRFQEGD (85 aa)).

This sequence belongs to the TRAFAC class TrmE-Era-EngA-EngB-Septin-like GTPase superfamily. EngA (Der) GTPase family. In terms of assembly, associates with the 50S ribosomal subunit.

Its function is as follows. GTPase that plays an essential role in the late steps of ribosome biogenesis. This chain is GTPase Der, found in Shewanella oneidensis (strain ATCC 700550 / JCM 31522 / CIP 106686 / LMG 19005 / NCIMB 14063 / MR-1).